A 433-amino-acid chain; its full sequence is Xylose isomerase (433 aa).

Residues D305 and D307 each coordinate Mg(2+).

This sequence belongs to the xylose isomerase family. As to quaternary structure, homotetramer. Requires Mg(2+) as cofactor.

Its subcellular location is the cytoplasm. It catalyses the reaction alpha-D-xylose = alpha-D-xylulofuranose. This is Xylose isomerase from Cereibacter sphaeroides (strain KD131 / KCTC 12085) (Rhodobacter sphaeroides).